Here is a 134-residue protein sequence, read N- to C-terminus: MGRDTIADIITSIRNADMDKKRVVRIASTNITENVVKILLREGFIENVRKHQENKKDFLVLTLRHRRNRKRPYRNILNLKRISRPGLRIYSNYQRIPRILGGIGIVILSTSRGIMTDREARLERIGGEILCYIW.

This sequence belongs to the universal ribosomal protein uS8 family. In terms of assembly, part of the 30S ribosomal subunit.

It is found in the plastid. It localises to the chloroplast. Functionally, one of the primary rRNA binding proteins, it binds directly to 16S rRNA central domain where it helps coordinate assembly of the platform of the 30S subunit. The sequence is that of Small ribosomal subunit protein uS8c (rps8) from Panax ginseng (Korean ginseng).